Consider the following 513-residue polypeptide: MVVSPSTMAAVRASGAVPNAEFLLAADGIRKEFPGVVALDDVQFHLKRGTVHALMGENGAGKSTLMKILAGIYQPDNGEIRLKGAPIRLDSPLDALENGIAMIHQELNLMAYMTVAENIWIRREPKNRLGFIDHGEMYRRTETLLERLGIDLDPETRVGELSVASRQMVEIAKAVSYNSDVLIMDEPTSALTEREVEHLFRIIRDLRERGIGIVYITHKMNELFEIADEFSVFRDGKYIGTHASTDVTRDDIIRMMVGREITQMFPKEEVPIGDVVLSVKNLNLDGVFHDVSFDVRAGEILGVAGLVGSGRSNVAETVFGVTPASSGTISIDGKPVSIDSPTTAISHRMAFLTEDRKDTGCLLILNILENMQIAVLQDKYVANGFVQENALSEACEEMCRKLRVKTPHLYERIENLSGGNQQKVLIGRWMLTKPRILILDEPTRGIDVGAKAEIHKLVCEMARQGVAVIMISSEMPEVLGMSDRVMVMHEGRVTGFLARSEATQVKVMDLASR.

ABC transporter domains are found at residues 24-260 (LAAD…VGRE) and 270-510 (VPIG…VMDL). An ATP-binding site is contributed by 56–63 (GENGAGKS).

Belongs to the ABC transporter superfamily. Carbohydrate importer 2 (CUT2) (TC 3.A.1.2) family.

The protein localises to the cell inner membrane. It catalyses the reaction D-ribose(out) + ATP + H2O = D-ribose(in) + ADP + phosphate + H(+). The enzyme catalyses D-galactose(out) + ATP + H2O = D-galactose(in) + ADP + phosphate + H(+). Part of an ABC transporter complex involved in carbohydrate import. Could be involved in ribose, galactose and/or methyl galactoside import. Responsible for energy coupling to the transport system. The protein is Putative ribose/galactose/methyl galactoside import ATP-binding protein 2 of Agrobacterium fabrum (strain C58 / ATCC 33970) (Agrobacterium tumefaciens (strain C58)).